We begin with the raw amino-acid sequence, 104 residues long: L-rhamnose mutarotase (104 aa).

Substrate is bound at residue Tyr18. The active-site Proton donor is the His22. Residues Tyr41 and 76 to 77 each bind substrate; that span reads WW.

Belongs to the rhamnose mutarotase family. Homodimer.

Its subcellular location is the cytoplasm. It carries out the reaction alpha-L-rhamnose = beta-L-rhamnose. Its pathway is carbohydrate metabolism; L-rhamnose metabolism. In terms of biological role, involved in the anomeric conversion of L-rhamnose. The chain is L-rhamnose mutarotase from Lactiplantibacillus plantarum (strain ATCC BAA-793 / NCIMB 8826 / WCFS1) (Lactobacillus plantarum).